We begin with the raw amino-acid sequence, 584 residues long: Outer membrane transporter CdiB-2 (584 aa).

An N-terminal signal peptide occupies residues 1–20; that stretch reads MATRFAILPVTALITLTAQA. The segment covering 24 to 44 has biased composition (low complexity); it reads PTPNDQAAAARANAEQNQQAQ. The segment at 24 to 72 is disordered; the sequence is PTPNDQAAAARANAEQNQQAQQRRDAQQRDATVQAPGVRSDVPRPEAYP. The POTRA domain maps to 98 to 171; the sequence is SKAQGASALP…GALKLALIPG (74 aa).

This sequence belongs to the TPS (TC 1.B.20) family.

The protein resides in the cell outer membrane. Potential outer membrane protein component of a toxin-immunity protein module, which functions as a cellular contact-dependent growth inhibition (CDI) system. CDI modules allow bacteria to communicate with and inhibit the growth of closely related neighboring bacteria in a contact-dependent fashion. This protein may be required for secretion and assembly of the CdiA toxin protein. Its function is as follows. Expression of this cdiAIB locus in B.thailandensis confers protection against other bacteria carrying the locus; growth inhibition requires cellular contact. In terms of biological role, probable member of a two partner secretion pathway (TPS) in which it mediates the secretion of CdiA2. This chain is Outer membrane transporter CdiB-2 (cdiB2), found in Burkholderia pseudomallei (strain 1026b).